The primary structure comprises 385 residues: Nuclear hormone receptor family member nhr-68 (385 aa).

Residues 4-79 constitute a DNA-binding region (nuclear receptor); that stretch reads KEVCLVCQDF…VGMDKTSLQA (76 aa). 2 consecutive NR C4-type zinc fingers follow at residues 7 to 27 and 43 to 62; these read CLVCQDFSSGYHYGIPSCNGC and CQFDQNCPVDKSIRCACRFC. A disordered region spans residues 81-110; the sequence is RDPIGYTKRNKKTLRHPMNELSGDESNSCT. In terms of domain architecture, NR LBD spans 145 to 384; sequence PKRSLKQALC…SFAKELIFGD (240 aa). Positions 373–384 are AF-2; sequence FTSFAKELIFGD.

This sequence belongs to the nuclear hormone receptor family.

Its subcellular location is the nucleus. Probable transcription factor that acts in a feed-forward loop with nhr-10 to activate genes, including itself, involved in the vitamin B12-independent breakdown of the short-chain fatty acid propionate. This pathway is triggered in response to a diet low in vitamin B12, when canonical vitamin B12-dependent propionate breakdown cannot function; the resulting accumulation of propionate is probably sensed by nhr-68 and/or nhr-10. This is Nuclear hormone receptor family member nhr-68 from Caenorhabditis elegans.